The sequence spans 134 residues: Ribosome-binding factor A (134 aa).

It belongs to the RbfA family. Monomer. Binds 30S ribosomal subunits, but not 50S ribosomal subunits or 70S ribosomes.

It is found in the cytoplasm. Its function is as follows. One of several proteins that assist in the late maturation steps of the functional core of the 30S ribosomal subunit. Associates with free 30S ribosomal subunits (but not with 30S subunits that are part of 70S ribosomes or polysomes). Required for efficient processing of 16S rRNA. May interact with the 5'-terminal helix region of 16S rRNA. The polypeptide is Ribosome-binding factor A (Synechococcus sp. (strain CC9311)).